The sequence spans 144 residues: HTH-type transcriptional regulator MntR (144 aa).

Residues 1 to 63 (MTTPSMEDYI…YEKYRGLILT (63 aa)) form the HTH dtxR-type domain. Positions 8, 11, 77, 99, 102, and 103 each coordinate Mn(2+).

The protein belongs to the DtxR/MntR family. As to quaternary structure, homodimer.

It localises to the cytoplasm. Its activity is regulated as follows. DNA binding is strongly activated by Mn(2+). Central regulator of manganese homeostasis. The sequence is that of HTH-type transcriptional regulator MntR from Bacillus pumilus (strain SAFR-032).